A 390-amino-acid chain; its full sequence is MNLHEYQAKELLSRYGLPVQQGILAKSPEEAAAAYDKLGGKFAVVKAQVHAGGRGKAGGVKVVKSREEAAEVAKTLIGTNLVTYQTDAAGQPVNSVLVCEDMYPVQRELYLGAVVDRGSQRVVFMVSTEGGVEIEKVAEETPEKIIKIEVDPLVGMQPFQARDAAFALGLSGAQVAAFSKLMLGSYQAFIENDFALFEVNPLALRENGELACVDGKINLDSNALYRHPELLAQRDKSQENEREVKASEFDLNYVALEGNIGCMVNGAGLAMATMDIIKLKGGQPANFLDVGGGATKERVIEAFKLILADTSVQGVLINIFGGIVRCDMIAEAIIAAVKEVNVTVPVVVRLEGNNAELGAKILDESGLKLTSAQGLNDAAEKIVAAVKAVA.

The region spanning 9 to 245 (KELLSRYGLP…KSQENEREVK (237 aa)) is the ATP-grasp domain. ATP-binding positions include K46, 53–55 (GRG), E100, Y103, and E108. Mg(2+) is bound by residues N200 and D214. Substrate is bound by residues N265 and 322–324 (GIV).

This sequence belongs to the succinate/malate CoA ligase beta subunit family. Heterotetramer of two alpha and two beta subunits. Requires Mg(2+) as cofactor.

It carries out the reaction succinate + ATP + CoA = succinyl-CoA + ADP + phosphate. The catalysed reaction is GTP + succinate + CoA = succinyl-CoA + GDP + phosphate. Its pathway is carbohydrate metabolism; tricarboxylic acid cycle; succinate from succinyl-CoA (ligase route): step 1/1. Its function is as follows. Succinyl-CoA synthetase functions in the citric acid cycle (TCA), coupling the hydrolysis of succinyl-CoA to the synthesis of either ATP or GTP and thus represents the only step of substrate-level phosphorylation in the TCA. The beta subunit provides nucleotide specificity of the enzyme and binds the substrate succinate, while the binding sites for coenzyme A and phosphate are found in the alpha subunit. The sequence is that of Succinate--CoA ligase [ADP-forming] subunit beta from Chromobacterium violaceum (strain ATCC 12472 / DSM 30191 / JCM 1249 / CCUG 213 / NBRC 12614 / NCIMB 9131 / NCTC 9757 / MK).